The primary structure comprises 289 residues: Shikimate dehydrogenase (NADP(+)) (289 aa).

Residues 20-22 and Ser67 contribute to the shikimate site; that span reads SIS. Lys71 serves as the catalytic Proton acceptor. Residue Asp83 coordinates NADP(+). Positions 92 and 107 each coordinate shikimate. NADP(+) is bound by residues 132–136 and Val230; that span reads GGGGA. Tyr232 is a binding site for shikimate. Gly253 serves as a coordination point for NADP(+).

Belongs to the shikimate dehydrogenase family. Homodimer.

The catalysed reaction is shikimate + NADP(+) = 3-dehydroshikimate + NADPH + H(+). Its pathway is metabolic intermediate biosynthesis; chorismate biosynthesis; chorismate from D-erythrose 4-phosphate and phosphoenolpyruvate: step 4/7. In terms of biological role, involved in the biosynthesis of the chorismate, which leads to the biosynthesis of aromatic amino acids. Catalyzes the reversible NADPH linked reduction of 3-dehydroshikimate (DHSA) to yield shikimate (SA). The chain is Shikimate dehydrogenase (NADP(+)) from Streptococcus suis (strain 98HAH33).